We begin with the raw amino-acid sequence, 374 residues long: Putative heme chaperone HemW-like protein (374 aa).

Positions 1-231 (MKLLGLYINI…EKLLKKSGYK (231 aa)) constitute a Radical SAM core domain.

This sequence belongs to the anaerobic coproporphyrinogen-III oxidase family. HemW subfamily.

It localises to the cytoplasm. In terms of biological role, might be a heme chaperone; in E.coli heme binds independently of binding to [4Fe-4S] or S-adenosyl-L-methionine. The chain is Putative heme chaperone HemW-like protein from Buchnera aphidicola subsp. Baizongia pistaciae (strain Bp).